The sequence spans 262 residues: Acyl-[acyl-carrier-protein]--UDP-N-acetylglucosamine O-acyltransferase (262 aa).

This sequence belongs to the transferase hexapeptide repeat family. LpxA subfamily. Homotrimer.

It localises to the cytoplasm. It catalyses the reaction a (3R)-hydroxyacyl-[ACP] + UDP-N-acetyl-alpha-D-glucosamine = a UDP-3-O-[(3R)-3-hydroxyacyl]-N-acetyl-alpha-D-glucosamine + holo-[ACP]. The protein operates within glycolipid biosynthesis; lipid IV(A) biosynthesis; lipid IV(A) from (3R)-3-hydroxytetradecanoyl-[acyl-carrier-protein] and UDP-N-acetyl-alpha-D-glucosamine: step 1/6. In terms of biological role, involved in the biosynthesis of lipid A, a phosphorylated glycolipid that anchors the lipopolysaccharide to the outer membrane of the cell. The sequence is that of Acyl-[acyl-carrier-protein]--UDP-N-acetylglucosamine O-acyltransferase from Psychromonas ingrahamii (strain DSM 17664 / CCUG 51855 / 37).